The following is a 97-amino-acid chain: uncharacterized protein (97 aa).

This is an uncharacterized protein from Methanothermococcus thermolithotrophicus (Methanococcus thermolithotrophicus).